Reading from the N-terminus, the 90-residue chain is Co-chaperonin GroES (90 aa).

The protein belongs to the GroES chaperonin family. In terms of assembly, heptamer of 7 subunits arranged in a ring. Interacts with the chaperonin GroEL.

Its subcellular location is the cytoplasm. In terms of biological role, together with the chaperonin GroEL, plays an essential role in assisting protein folding. The GroEL-GroES system forms a nano-cage that allows encapsulation of the non-native substrate proteins and provides a physical environment optimized to promote and accelerate protein folding. GroES binds to the apical surface of the GroEL ring, thereby capping the opening of the GroEL channel. This is Co-chaperonin GroES from Thermosipho africanus (strain TCF52B).